Consider the following 154-residue polypeptide: D-aminoacyl-tRNA deacylase (154 aa).

Positions 142 to 143 match the Gly-cisPro motif, important for rejection of L-amino acids motif; that stretch reads GP.

It belongs to the DTD family. In terms of assembly, homodimer.

It localises to the cytoplasm. The enzyme catalyses glycyl-tRNA(Ala) + H2O = tRNA(Ala) + glycine + H(+). It carries out the reaction a D-aminoacyl-tRNA + H2O = a tRNA + a D-alpha-amino acid + H(+). An aminoacyl-tRNA editing enzyme that deacylates mischarged D-aminoacyl-tRNAs. Also deacylates mischarged glycyl-tRNA(Ala), protecting cells against glycine mischarging by AlaRS. Acts via tRNA-based rather than protein-based catalysis; rejects L-amino acids rather than detecting D-amino acids in the active site. By recycling D-aminoacyl-tRNA to D-amino acids and free tRNA molecules, this enzyme counteracts the toxicity associated with the formation of D-aminoacyl-tRNA entities in vivo and helps enforce protein L-homochirality. The polypeptide is D-aminoacyl-tRNA deacylase (Polaromonas naphthalenivorans (strain CJ2)).